The following is a 422-amino-acid chain: Tyrosine--tRNA ligase (422 aa).

An L-tyrosine-binding site is contributed by tyrosine 34. The short motif at proline 39–histidine 48 is the 'HIGH' region element. Tyrosine 172 and glutamine 176 together coordinate L-tyrosine. The 'KMSKS' region signature appears at lysine 232–threonine 236. Residue lysine 235 participates in ATP binding. One can recognise an S4 RNA-binding domain in the interval lysine 354–lysine 412.

This sequence belongs to the class-I aminoacyl-tRNA synthetase family. TyrS type 1 subfamily. In terms of assembly, homodimer.

The protein resides in the cytoplasm. The enzyme catalyses tRNA(Tyr) + L-tyrosine + ATP = L-tyrosyl-tRNA(Tyr) + AMP + diphosphate + H(+). Catalyzes the attachment of tyrosine to tRNA(Tyr) in a two-step reaction: tyrosine is first activated by ATP to form Tyr-AMP and then transferred to the acceptor end of tRNA(Tyr). The chain is Tyrosine--tRNA ligase from Buchnera aphidicola subsp. Schizaphis graminum (strain Sg).